A 158-amino-acid polypeptide reads, in one-letter code: NAD(P)H-quinone oxidoreductase subunit J, chloroplastic (158 aa).

It belongs to the complex I 30 kDa subunit family. As to quaternary structure, NDH is composed of at least 16 different subunits, 5 of which are encoded in the nucleus.

It localises to the plastid. The protein localises to the chloroplast thylakoid membrane. The enzyme catalyses a plastoquinone + NADH + (n+1) H(+)(in) = a plastoquinol + NAD(+) + n H(+)(out). It carries out the reaction a plastoquinone + NADPH + (n+1) H(+)(in) = a plastoquinol + NADP(+) + n H(+)(out). Its function is as follows. NDH shuttles electrons from NAD(P)H:plastoquinone, via FMN and iron-sulfur (Fe-S) centers, to quinones in the photosynthetic chain and possibly in a chloroplast respiratory chain. The immediate electron acceptor for the enzyme in this species is believed to be plastoquinone. Couples the redox reaction to proton translocation, and thus conserves the redox energy in a proton gradient. This Dioscorea elephantipes (Elephant's foot yam) protein is NAD(P)H-quinone oxidoreductase subunit J, chloroplastic.